A 217-amino-acid polypeptide reads, in one-letter code: Ras-related protein RABA5b (217 aa).

19-26 lines the GTP pocket; it reads GDSAVGKS. The Effector region motif lies at 41 to 49; sequence SKATIGVEF. Residues 67-71, 125-128, and 155-156 contribute to the GTP site; these read DTAGQ, NKCD, and SA. Residues cysteine 214 and cysteine 215 are each lipidated (S-geranylgeranyl cysteine).

This sequence belongs to the small GTPase superfamily. Rab family.

It is found in the cell membrane. Intracellular vesicle trafficking and protein transport. The polypeptide is Ras-related protein RABA5b (RABA5B) (Arabidopsis thaliana (Mouse-ear cress)).